A 509-amino-acid polypeptide reads, in one-letter code: GMP synthase [glutamine-hydrolyzing] (509 aa).

One can recognise a Glutamine amidotransferase type-1 domain in the interval 4–194 (KVIVLDFGGQ…LYEICGLTPD (191 aa)). The active-site Nucleophile is the Cys-81. Active-site residues include His-168 and Glu-170. The region spanning 195–384 (WTMESFAQKA…LGLPESIVWR (190 aa)) is the GMPS ATP-PPase domain. 222-228 (SGGVDSS) lines the ATP pocket.

Homodimer.

It catalyses the reaction XMP + L-glutamine + ATP + H2O = GMP + L-glutamate + AMP + diphosphate + 2 H(+). It participates in purine metabolism; GMP biosynthesis; GMP from XMP (L-Gln route): step 1/1. In terms of biological role, catalyzes the synthesis of GMP from XMP. This Carboxydothermus hydrogenoformans (strain ATCC BAA-161 / DSM 6008 / Z-2901) protein is GMP synthase [glutamine-hydrolyzing].